Here is a 557-residue protein sequence, read N- to C-terminus: Glypican-1 (557 aa).

Positions 1 to 23 are cleaved as a signal peptide; it reads MELRTRGWWLLCAAAALVVCARG. Cystine bridges form between C32-C68, C62-C255, C69-C258, C190-C342, C245-C278, C267-C414, and C271-C400. N-linked (GlcNAc...) asparagine glycans are attached at residues N79 and N116. The tract at residues 477–531 is disordered; that stretch reads FQDASDDGSGSGSGGGCPDDTCGRRVSKKSSSSRTPLTHALPGLSEQEGQKTSAA. Residues S485, S487, and S489 are each glycosylated (O-linked (Xyl...) (heparan sulfate) serine). S529 is lipidated: GPI-anchor amidated serine. Positions 530–557 are cleaved as a propeptide — removed in mature form; sequence AATCPEPHSFFLLFLVTLVLAAARPRWR.

It belongs to the glypican family. S-nitrosylated in a Cu(2+)-dependent manner. Nitric acid (NO) is released from the nitrosylated cysteines by ascorbate or by some other reducing agent, in a Cu(2+) or Zn(2+) dependent manner. This free nitric oxide is then capable of cleaving the heparan sulfate side chains. In terms of processing, N- and O-glycosylated. N-glycosylation is mainly of the complex type containing sialic acid. O-glycosylated with heparan sulfate. The heparan sulfate chains can be cleaved either by the action of heparanase or, degraded by a deaminative process that uses nitric oxide (NO) released from the S-nitrosylated cysteines. This process is triggered by ascorbate, or by some other reducing agent, in a Cu(2+)- or Zn(2+) dependent manner. Cu(2+) ions are provided by ceruloproteins such as APP, PRNP or CP which associate with GCP1 in intracellular compartments or lipid rafts. Post-translationally, this cell-associated glypican is further processed to give rise to a medium-released species.

The protein resides in the cell membrane. Its subcellular location is the endosome. The protein localises to the secreted. It localises to the extracellular space. Functionally, cell surface proteoglycan that bears heparan sulfate. Binds, via the heparan sulfate side chains, alpha-4 (V) collagen and participates in Schwann cell myelination. May act as a catalyst in increasing the rate of conversion of prion protein PRPN(C) to PRNP(Sc) via associating (via the heparan sulfate side chains) with both forms of PRPN, targeting them to lipid rafts and facilitating their interaction. Required for proper skeletal muscle differentiation by sequestering FGF2 in lipid rafts preventing its binding to receptors (FGFRs) and inhibiting the FGF-mediated signaling. Binds Cu(2+) or Zn(2+) ions. This is Glypican-1 (Gpc1) from Mus musculus (Mouse).